The chain runs to 277 residues: NLP effector protein Pc109174 (277 aa).

A signal peptide spans 1-19 (MNLVPALVLLLALAQTVLG). The Hepta-peptide GHRHDWE motif motif lies at 119–125 (KSRHLWA). N-linked (GlcNAc...) asparagine glycosylation is present at N199.

It belongs to the Necrosis inducing protein (NPP1) family.

The protein resides in the secreted. In terms of biological role, secreted effector that contributes strongly to virulence during infection by P.capsici. Induces cell death in the Solanaceae, including hot pepper. The chain is NLP effector protein Pc109174 from Phytophthora capsici.